The chain runs to 348 residues: Centromere protein N (348 aa).

Belongs to the CENP-N/CHL4 family.

The protein resides in the nucleus. The protein localises to the chromosome. Its subcellular location is the centromere. Its function is as follows. Probable component of a centromeric complex involved in assembly of kinetochore proteins, mitotic progression and chromosome segregation. This Xenopus tropicalis (Western clawed frog) protein is Centromere protein N (cenpn).